The primary structure comprises 452 residues: Phosphoglucosamine mutase (452 aa).

Catalysis depends on S105, which acts as the Phosphoserine intermediate. 4 residues coordinate Mg(2+): S105, D244, D246, and D248. Position 105 is a phosphoserine (S105).

Belongs to the phosphohexose mutase family. Mg(2+) is required as a cofactor. Activated by phosphorylation.

The enzyme catalyses alpha-D-glucosamine 1-phosphate = D-glucosamine 6-phosphate. Catalyzes the conversion of glucosamine-6-phosphate to glucosamine-1-phosphate. The sequence is that of Phosphoglucosamine mutase from Blochmanniella floridana.